A 123-amino-acid chain; its full sequence is Small ribosomal subunit protein uS12 (123 aa).

Asp-89 bears the 3-methylthioaspartic acid mark. A disordered region spans residues 104-123 (TAGVQDRRQGRSKYGAKRPK). Basic residues predominate over residues 113–123 (GRSKYGAKRPK).

It belongs to the universal ribosomal protein uS12 family. As to quaternary structure, part of the 30S ribosomal subunit. Contacts proteins S8 and S17. May interact with IF1 in the 30S initiation complex.

With S4 and S5 plays an important role in translational accuracy. In terms of biological role, interacts with and stabilizes bases of the 16S rRNA that are involved in tRNA selection in the A site and with the mRNA backbone. Located at the interface of the 30S and 50S subunits, it traverses the body of the 30S subunit contacting proteins on the other side and probably holding the rRNA structure together. The combined cluster of proteins S8, S12 and S17 appears to hold together the shoulder and platform of the 30S subunit. The chain is Small ribosomal subunit protein uS12 from Oleidesulfovibrio alaskensis (strain ATCC BAA-1058 / DSM 17464 / G20) (Desulfovibrio alaskensis).